The primary structure comprises 404 residues: Coenzyme F(430) synthetase (404 aa).

112–117 (GVKGKT) is a binding site for ATP.

This sequence belongs to the MurCDEF family.

The catalysed reaction is 15,17(3)-seco-F430-17(3)-acid + ATP = coenzyme F430 + ADP + phosphate. Its function is as follows. Involved in the biosynthesis of the unique nickel-containing tetrapyrrole coenzyme F430, the prosthetic group of methyl-coenzyme M reductase (MCR), which plays a key role in methanogenesis and anaerobic methane oxidation. Catalyzes the activation the g-propionate side chain of 15,17(3)-seco-F430-17(3)-acid (seco-F430) for intramolecular C-C bond formation to yield the carbocyclic F ring of coenzyme F430. In Methanocaldococcus jannaschii (strain ATCC 43067 / DSM 2661 / JAL-1 / JCM 10045 / NBRC 100440) (Methanococcus jannaschii), this protein is Coenzyme F(430) synthetase.